Here is a 170-residue protein sequence, read N- to C-terminus: Double homeobox protein 1 (170 aa).

DNA-binding regions (homeobox) lie at residues 19–78 (GRRM…LRQH) and 94–153 (GRRK…RGQS). Residues 75 to 100 (LRQHRRQSRPWPGRRDPQKGRRKRTA) are disordered.

It belongs to the paired homeobox family. As to expression, expressed in rhabdomyosarcoma TE671 cells as well as in several other normal and cancer cells.

It localises to the nucleus. Probable transcription activator. Binds the P5 DNA element sequence 5'-GATCTGAGTCTAATTGAGAATTACTGTAC-3'. This Homo sapiens (Human) protein is Double homeobox protein 1 (DUX1).